The sequence spans 46 residues: Apamin (46 aa).

Residues 1–27 form the signal peptide; sequence MISMLRCISLFLSVILITGYFVTPVMS. Intrachain disulfides connect Cys28/Cys38 and Cys30/Cys42. Residues 40–41 form an essential for toxin activity region; the sequence is RR. His45 carries the post-translational modification Histidine amide.

As to expression, expressed by the venom gland.

The protein resides in the secreted. Neurotoxin that blocks voltage-independent calcium-activated potassium channels (KCNN1=SK1, KCNN2=SK2, KCNN3=SK3). This chain is Apamin, found in Apis cerana cerana (Oriental honeybee).